The primary structure comprises 310 residues: Putative HTH-type transcriptional regulatory protein YN1551_1579 (310 aa).

The HTH cro/C1-type domain occupies 125-180 (LKHKREEMGYSIGDVAKFLGVSRKAIYDYEKGDSDVSLEVAEKLIDLFGDDIIGDV). A DNA-binding region (H-T-H motif) is located at residues 136–155 (IGDVAKFLGVSRKAIYDYEK).

The polypeptide is Putative HTH-type transcriptional regulatory protein YN1551_1579 (Saccharolobus islandicus (strain Y.N.15.51 / Yellowstone #2) (Sulfolobus islandicus)).